We begin with the raw amino-acid sequence, 235 residues long: NADH-quinone oxidoreductase subunit C (235 aa).

The protein belongs to the complex I 30 kDa subunit family. In terms of assembly, NDH-1 is composed of 14 different subunits. Subunits NuoB, C, D, E, F, and G constitute the peripheral sector of the complex.

The protein resides in the cell membrane. The catalysed reaction is a quinone + NADH + 5 H(+)(in) = a quinol + NAD(+) + 4 H(+)(out). In terms of biological role, NDH-1 shuttles electrons from NADH, via FMN and iron-sulfur (Fe-S) centers, to quinones in the respiratory chain. The immediate electron acceptor for the enzyme in this species is believed to be a menaquinone. Couples the redox reaction to proton translocation (for every two electrons transferred, four hydrogen ions are translocated across the cytoplasmic membrane), and thus conserves the redox energy in a proton gradient. In Mycolicibacterium paratuberculosis (strain ATCC BAA-968 / K-10) (Mycobacterium paratuberculosis), this protein is NADH-quinone oxidoreductase subunit C.